Reading from the N-terminus, the 337-residue chain is MIQKNWQELIKPNKIEFHAHSNPNVLSVVAEPLERGFGLTLGNALRRILLSSLRGAAITAVQVEGVLHEFSSIPGVREDVADIILNIKEIAIRMEEEGPKRIVVCKEGPGIVKAGDIRTVGDMEILNPEHVICTLDEGAEIRMEFIVNTGKGYVPSDRNCFDDAPIGLIPIDSLYSPINKVSYKVENTREGQVLDYDKLTLTIETNGAVNGKDAVAFAARILQDQLSVFVNFKEPQKELVEEQTSELSFNPALLKKVDELELSVRSANCLKNDNIVYIGDLIQKTESEMLRTPNFGRKSLNEIKEVLACMGLHLGMEISAWPPENIDDLAKHYEDQY.

The alpha N-terminal domain (alpha-NTD) stretch occupies residues 1–233 (MIQKNWQELI…DQLSVFVNFK (233 aa)). The segment at 249 to 337 (FNPALLKKVD…DLAKHYEDQY (89 aa)) is alpha C-terminal domain (alpha-CTD).

This sequence belongs to the RNA polymerase alpha chain family. In terms of assembly, homodimer. The RNAP catalytic core consists of 2 alpha, 1 beta, 1 beta' and 1 omega subunit. When a sigma factor is associated with the core the holoenzyme is formed, which can initiate transcription.

It catalyses the reaction RNA(n) + a ribonucleoside 5'-triphosphate = RNA(n+1) + diphosphate. In terms of biological role, DNA-dependent RNA polymerase catalyzes the transcription of DNA into RNA using the four ribonucleoside triphosphates as substrates. In Bartonella bacilliformis (strain ATCC 35685 / KC583 / Herrer 020/F12,63), this protein is DNA-directed RNA polymerase subunit alpha.